The following is a 447-amino-acid chain: Kynureninase (447 aa).

Residues Leu-106, Thr-107, 134-137 (FPSD), Asp-220, His-223, and Tyr-245 each bind pyridoxal 5'-phosphate. Lys-246 is subject to N6-(pyridoxal phosphate)lysine. Pyridoxal 5'-phosphate contacts are provided by Trp-275 and Asn-303.

The protein belongs to the kynureninase family. As to quaternary structure, homodimer. The cofactor is pyridoxal 5'-phosphate.

The protein resides in the cytoplasm. The enzyme catalyses L-kynurenine + H2O = anthranilate + L-alanine + H(+). The catalysed reaction is 3-hydroxy-L-kynurenine + H2O = 3-hydroxyanthranilate + L-alanine + H(+). Its pathway is amino-acid degradation; L-kynurenine degradation; L-alanine and anthranilate from L-kynurenine: step 1/1. The protein operates within cofactor biosynthesis; NAD(+) biosynthesis; quinolinate from L-kynurenine: step 2/3. In terms of biological role, catalyzes the cleavage of L-kynurenine (L-Kyn) and L-3-hydroxykynurenine (L-3OHKyn) into anthranilic acid (AA) and 3-hydroxyanthranilic acid (3-OHAA), respectively. The chain is Kynureninase from Eremothecium gossypii (strain ATCC 10895 / CBS 109.51 / FGSC 9923 / NRRL Y-1056) (Yeast).